We begin with the raw amino-acid sequence, 356 residues long: MTTSFARNVPLADYTTLGLGGPAARFCSVASTDELIATVRDVDRSGDPLLVLGGGSNLVVADEGFAGTVIQVDSSDLSYTEVDDTVVRVRVDAGMEWDSFVARCVDEGLSGVEALSGIPGRVGATPIQNVGAYGQDISQTVVEVTVYDRAADRTRVLSAAECGFAYRTSIFKGRDRYVVCDVVFELTRSKLSRPIRYAELARSLGVSQGDQVPLADVRDAVLSLRRSKGMVLDPADPDTRSAGSFFTNPILSADEFARFTQRVAEVLGPEVTPPAYPDGDGRVKTSAAWLIERAGFPKGYGTGPVGISTKHTLALTNRGGATTADLLALAREVRAGVARVFGITLVNEPVMIGVTL.

In terms of domain architecture, FAD-binding PCMH-type spans 19 to 227; it reads LGGPAARFCS…RDAVLSLRRS (209 aa). Arg167 is a catalytic residue. Catalysis depends on Ser244, which acts as the Proton donor. The active site involves Glu348.

Belongs to the MurB family. FAD is required as a cofactor.

It localises to the cytoplasm. The catalysed reaction is UDP-N-acetyl-alpha-D-muramate + NADP(+) = UDP-N-acetyl-3-O-(1-carboxyvinyl)-alpha-D-glucosamine + NADPH + H(+). It functions in the pathway cell wall biogenesis; peptidoglycan biosynthesis. Cell wall formation. The sequence is that of UDP-N-acetylenolpyruvoylglucosamine reductase from Thermobifida fusca (strain YX).